Consider the following 555-residue polypeptide: Inositol 1,4,5-triphosphate receptor associated 2 (555 aa).

Over 1 to 495 (MESTPFSGVA…LKSSIRKANK (495 aa)) the chain is Cytoplasmic. Disordered regions lie at residues 84–103 (SLPLPRHTSSTDGTITSSDP) and 128–147 (RSASPTIEAQGTSPAHDNIA). Thr91 is modified (phosphothreonine). Over residues 91-102 (TSSTDGTITSSD) the composition is skewed to low complexity. Residues 129 to 142 (SASPTIEAQGTSPA) are compositionally biased toward polar residues. Residues 227-341 (TLEKRVKLEE…LEELKQVLLQ (115 aa)) are a coiled coil. Phosphoserine is present on residues Ser363, Ser370, and Ser424. The tract at residues 437–469 (ELKTKDDSEPSGEETVERTRKPSLSEKKNNPSK) is disordered. Positions 451–465 (TVERTRKPSLSEKKN) are enriched in basic and acidic residues. A helical; Anchor for type IV membrane protein transmembrane segment spans residues 496–516 (ALWLSIAFIVLFAALMSFLTG). Topologically, residues 517 to 555 (QLFQKSVDAAPTQQEDSWTSLEHILWPFTRLRHNGPPPV) are lumenal.

Belongs to the IRAG2 family. Interacts (via coiled-coil domain) with ITPR3. Interacts with SUN1 and SUN2. Interacts with microtubules. Interacts with HCN4; regulates HCN4 channel activity. The removal of the C-terminal lumenal domain occurs by proteolytic processing. In terms of tissue distribution, expressed at high levels in pre B-cells, mature B-cells and pre T-cells. Expressed at low levels in mature T-cells and plasma B-cells. Expressed in germinal center B-cells, splenic marginal zone cells and B-cell lymphomas. Expressed in neuronal cells in the cerebral cortex, epithelial cells in tonsil, adrenal glands, zymogen-producing cells in the stomach and epithelial cells in seminal vesicles.

Its subcellular location is the cytoplasm. It localises to the endoplasmic reticulum membrane. The protein resides in the nucleus envelope. It is found in the cytoskeleton. The protein localises to the microtubule organizing center. Its subcellular location is the centrosome. It localises to the spindle pole. The protein resides in the chromosome. Plays a role in the delivery of peptides to major histocompatibility complex (MHC) class I molecules; this occurs in a transporter associated with antigen processing (TAP)-independent manner. May play a role in taste signal transduction via ITPR3. May play a role during fertilization in pronucleus congression and fusion. Plays a role in maintaining nuclear shape, maybe as a component of the LINC complex and through interaction with microtubules. Plays a role in the regulation of cellular excitability by regulating the hyperpolarization-activated cyclic nucleotide-gated HCN4 channel activity. This Homo sapiens (Human) protein is Inositol 1,4,5-triphosphate receptor associated 2.